The following is a 61-amino-acid chain: MAKTALIQKANSKPKFGVRAYTRCNRCGRPRSVYRKFGLCRICLREMALAGQLPGVTKSSW.

Cysteine 24, cysteine 27, cysteine 40, and cysteine 43 together coordinate Zn(2+).

It belongs to the universal ribosomal protein uS14 family. Zinc-binding uS14 subfamily. Part of the 30S ribosomal subunit. Contacts proteins S3 and S10. It depends on Zn(2+) as a cofactor.

Functionally, binds 16S rRNA, required for the assembly of 30S particles and may also be responsible for determining the conformation of the 16S rRNA at the A site. This is Small ribosomal subunit protein uS14 from Beutenbergia cavernae (strain ATCC BAA-8 / DSM 12333 / CCUG 43141 / JCM 11478 / NBRC 16432 / NCIMB 13614 / HKI 0122).